The primary structure comprises 494 residues: Solute carrier family 2, facilitated glucose transporter member 3 (494 aa).

Residues 1–10 (MGTTKVTAPL) are Cytoplasmic-facing. Residues 11–32 (IFAISVATIGSFQFGYNTGVIN) form a helical membrane-spanning segment. Topologically, residues 33–64 (APEAIIKDFLNYTLEERSEPPPSSVLLTSLWS) are extracellular. Asn43 is a glycosylation site (N-linked (GlcNAc...) asparagine). The chain crosses the membrane as a helical span at residues 65 to 85 (LSVAIFSVGGMIGSFSVGLFV). Topologically, residues 86-90 (NRFGR) are cytoplasmic. The chain crosses the membrane as a helical span at residues 91–111 (GNSMLIVNLLAIAGGCLMGFC). Over 112 to 118 (KIAESVE) the chain is Extracellular. Residues 119-142 (MLILGRLIIGLFCGLCTGFVPMYI) form a helical membrane-spanning segment. Residues 143 to 153 (GEISPTALRGA) are Cytoplasmic-facing. The helical transmembrane segment at 154–174 (FGTLNQLGIVIGILVAQIFGL) threads the bilayer. Gln159 lines the D-glucose pocket. At 175–183 (KVILGTEDL) the chain is on the extracellular side. A helical membrane pass occupies residues 184–204 (WPLLLGFTILPAIIQCAALPF). Over 205–269 (CPESPRFLLI…LFRAPNYRQP (65 aa)) the chain is Cytoplasmic. A Phosphothreonine modification is found at Thr232. The helical transmembrane segment at 270-290 (IIISIMLQLSQQLSGINAVFY) threads the bilayer. The interval 277–279 (QLS) is important for selectivity against fructose. Residues 280-281 (QQ) and Asn286 contribute to the D-glucose site. The Extracellular portion of the chain corresponds to 291 to 304 (YSTGIFKDAGVQEP). Residues 305–325 (VYATIGAGVVNTIFTVVSVFL) traverse the membrane as a helical segment. Residue Asn315 participates in D-glucose binding. Residues 326 to 331 (VERAGR) lie on the Cytoplasmic side of the membrane. The helical transmembrane segment at 332–352 (RTLHLIGLGGMAFCSILMTIS) threads the bilayer. Residues 353-363 (LLLKDNYSWMS) lie on the Extracellular side of the membrane. N-linked (GlcNAc...) asparagine glycosylation is present at Asn358. Residues 364–389 (FICIGAILVFVAFFEIGPGPIPWFIV) form a helical membrane-spanning segment. Glu378 and Trp386 together coordinate D-glucose. The Cytoplasmic segment spans residues 390-399 (AELFGQGPRP). A helical transmembrane segment spans residues 400 to 420 (AAMAVAGCSNWTSNFLVGLLF). The Extracellular segment spans residues 421-429 (PSAAFYLGA). The chain crosses the membrane as a helical span at residues 430 to 450 (YVFIVFTVFLVIFWVFTFFKV). Over 451–494 (PETRGRTFEEITRAFEGQTQTGTRGEKGPIMEMNSIQPTKDTNA) the chain is Cytoplasmic. A disordered region spans residues 469 to 494 (TQTGTRGEKGPIMEMNSIQPTKDTNA). Residues 484–494 (NSIQPTKDTNA) show a composition bias toward polar residues. Residue Ser485 is modified to Phosphoserine. Position 492 is a phosphothreonine (Thr492).

Belongs to the major facilitator superfamily. Sugar transporter (TC 2.A.1.1) family. Glucose transporter subfamily. Interacts with SMIM43; the interaction may promote SLC2A1-mediated glucose transport to meet the energy needs of mesendoderm differentiation.

It localises to the cell membrane. The protein resides in the perikaryon. Its subcellular location is the cell projection. It catalyses the reaction D-glucose(out) = D-glucose(in). The catalysed reaction is D-galactose(in) = D-galactose(out). With respect to regulation, deoxyglucose transport is inhibited by D-glucose, D-galactose and maltose. Galactose transport is inhibited by D-glucose and maltose. Functionally, facilitative glucose transporter. Can also mediate the uptake of various other monosaccharides across the cell membrane. Mediates the uptake of glucose, 2-deoxyglucose, galactose, mannose, xylose and fucose, and probably also dehydroascorbate. Does not mediate fructose transport. Required for mesendoderm differentiation. The sequence is that of Solute carrier family 2, facilitated glucose transporter member 3 from Bos taurus (Bovine).